The sequence spans 741 residues: Beta-galactosidase 10 (741 aa).

The signal sequence occupies residues 1 to 29 (MNRVTTESIASTAILVVMVFLFSWRSIEA). Residue N31 is glycosylated (N-linked (GlcNAc...) asparagine). E188 acts as the Proton donor in catalysis. The Nucleophile role is filled by E257. Residues N358, N396, N469, N525, and N583 are each glycosylated (N-linked (GlcNAc...) asparagine).

The protein belongs to the glycosyl hydrolase 35 family. In terms of tissue distribution, ubiquitous.

The protein localises to the secreted. Its subcellular location is the extracellular space. It localises to the apoplast. The catalysed reaction is Hydrolysis of terminal non-reducing beta-D-galactose residues in beta-D-galactosides.. This Arabidopsis thaliana (Mouse-ear cress) protein is Beta-galactosidase 10 (BGAL10).